We begin with the raw amino-acid sequence, 387 residues long: Glucose-1-phosphate adenylyltransferase (387 aa).

Residues Tyr99, Gly164, 179–180 (EK), and Ser190 contribute to the alpha-D-glucose 1-phosphate site.

This sequence belongs to the bacterial/plant glucose-1-phosphate adenylyltransferase family. Homotetramer.

The enzyme catalyses alpha-D-glucose 1-phosphate + ATP + H(+) = ADP-alpha-D-glucose + diphosphate. It functions in the pathway glycan biosynthesis; glycogen biosynthesis. Involved in the biosynthesis of ADP-glucose, a building block required for the elongation reactions to produce glycogen. Catalyzes the reaction between ATP and alpha-D-glucose 1-phosphate (G1P) to produce pyrophosphate and ADP-Glc. The sequence is that of Glucose-1-phosphate adenylyltransferase from Geobacillus stearothermophilus (Bacillus stearothermophilus).